The primary structure comprises 468 residues: E3 ubiquitin-protein ligase RGLG2 (468 aa).

A disordered region spans residues 1–89 (MGTGNSKENW…PSQSYGSDNK (89 aa)). The N-myristoyl glycine moiety is linked to residue glycine 2. Low complexity predominate over residues 12–45 (QSSFRSTSASSASPSSSSWASQQSYPQYGAESYN). Positions 46–65 (YPPPPSYAQPPEYTQPPPPL) are enriched in pro residues. Low complexity predominate over residues 66–84 (YSTQPYSAPSYSAPPSQSY). The VWFA domain occupies 122 to 342 (NLIVGIDFTK…KETEFALSAL (221 aa)). The interval 369–416 (FPLPPPMRGGSSSYNSPKPSRLPSFKPSVPPHPTEGYHVRSSPVPPPT) is disordered. The segment at 425 to 458 (CPICLSNPKDMAFGCGHQTCCECGPDLQMCPICR) adopts an RING-type zinc-finger fold.

In terms of assembly, interacts with the heterodimer UBC35/UEV1B, UBC35 alone, PIN1, but not with UCB2, UCB9, UEV1B or UEV1C alone. Interacts with ERF053. Post-translationally, N-myristoylated. Ubiquitously expressed.

It is found in the cell membrane. The protein localises to the nucleus. The catalysed reaction is S-ubiquitinyl-[E2 ubiquitin-conjugating enzyme]-L-cysteine + [acceptor protein]-L-lysine = [E2 ubiquitin-conjugating enzyme]-L-cysteine + N(6)-ubiquitinyl-[acceptor protein]-L-lysine.. In terms of biological role, E3 ubiquitin-protein ligase that mediates the formation of 'Lys-63'-linked ubiquitin chains. Regulates apical dominance by acting on the auxin transport proteins abundance. Mediates ubiquitination and subsequent proteasomal degradation of ERF053 in response to drought stress. Acts as a negative regulator of drought stress response. This is E3 ubiquitin-protein ligase RGLG2 from Arabidopsis thaliana (Mouse-ear cress).